Here is a 456-residue protein sequence, read N- to C-terminus: ACT domain-containing protein ACR5 (456 aa).

ACT domains follow at residues 39-115 (VIKV…FSPS), 130-207 (VVEL…SSGR), 271-347 (IVMI…VSEG), and 349-432 (KLEL…PSPQ).

As to expression, expressed in stems and siliques.

Functionally, may bind amino acids. The sequence is that of ACT domain-containing protein ACR5 from Arabidopsis thaliana (Mouse-ear cress).